We begin with the raw amino-acid sequence, 380 residues long: Ankyrin repeat domain-containing protein 63 (380 aa).

ANK repeat units lie at residues 11-40 (AGTR…RSII), 46-79 (QGRT…AVNL), 83-112 (RGRT…DPEA), 116-145 (AGNS…RLGL), and 153-182 (AGLT…RAAA). Low complexity-rich tracts occupy residues 181-203 (AAAA…PAAS) and 216-226 (RPLLARFARAA). The tract at residues 181–256 (AAAAAARGSN…GSERPELGRS (76 aa)) is disordered. Ser193 carries the post-translational modification Phosphoserine. Ser294 bears the Phosphoserine mark. Positions 309-368 (PIGLSPHPEGGPGSGRLGLRRRSTAPDIPSLVGEAPGPESGPELEANALSVSVPGPNPWQ) are disordered.

In Homo sapiens (Human), this protein is Ankyrin repeat domain-containing protein 63.